The chain runs to 142 residues: Putative nickel-responsive regulator (142 aa).

The Ni(2+) site is built by histidine 77, histidine 88, histidine 90, and cysteine 96.

Belongs to the transcriptional regulatory CopG/NikR family. In terms of assembly, homotetramer. Ni(2+) is required as a cofactor.

Its function is as follows. Transcriptional regulator. This Halobacterium salinarum (strain ATCC 700922 / JCM 11081 / NRC-1) (Halobacterium halobium) protein is Putative nickel-responsive regulator.